The sequence spans 256 residues: Large ribosomal subunit protein bL28m (256 aa).

A mitochondrion-targeting transit peptide spans Met1–Lys55.

Belongs to the bacterial ribosomal protein bL28 family. Component of the mitochondrial large ribosomal subunit (mt-LSU). Mature mammalian 55S mitochondrial ribosomes consist of a small (28S) and a large (39S) subunit. The 28S small subunit contains a 12S ribosomal RNA (12S mt-rRNA) and 30 different proteins. The 39S large subunit contains a 16S rRNA (16S mt-rRNA), a copy of mitochondrial valine transfer RNA (mt-tRNA(Val)), which plays an integral structural role, and 52 different proteins. Interacts with OXA1L. In terms of tissue distribution, found in a variety of normal tissues including spleen, testes, thymus, liver, kidney, brain, adrenal, lung and retinal tissue.

It localises to the mitochondrion. In Homo sapiens (Human), this protein is Large ribosomal subunit protein bL28m (MRPL28).